We begin with the raw amino-acid sequence, 505 residues long: Ribose import ATP-binding protein RbsA 2 (505 aa).

ABC transporter domains lie at 13-249 and 259-503; these read LALE…VGRD and VRAG…TGRA. An ATP-binding site is contributed by 45-52; the sequence is GENGAGKS.

Belongs to the ABC transporter superfamily. Ribose importer (TC 3.A.1.2.1) family. The complex is composed of an ATP-binding protein (RbsA), two transmembrane proteins (RbsC) and a solute-binding protein (RbsB).

The protein resides in the cell membrane. It catalyses the reaction D-ribose(out) + ATP + H2O = D-ribose(in) + ADP + phosphate + H(+). In terms of biological role, part of the ABC transporter complex RbsABC involved in ribose import. Responsible for energy coupling to the transport system. The protein is Ribose import ATP-binding protein RbsA 2 of Streptomyces avermitilis (strain ATCC 31267 / DSM 46492 / JCM 5070 / NBRC 14893 / NCIMB 12804 / NRRL 8165 / MA-4680).